The chain runs to 398 residues: MSKLVLVLNCGSSSLKFAVVDAESGAEHLTGLAECLGLPEARMKWKLDGKHEAQLGAGAAHVEALSFMVETILASKPELKANLGAIGHRIVHGGEQFTKSALITDEVLKGIQDAATFAPLHNPAHIIGIEAAKANFPGLKNVAVFDTAFHQTMPEESYLYALPYNLYKEHGIRRYGMHGTSHLFITREVAGLLNKPVEEVNIINCHLGNGASVCAIKNGESVDTSMGLTPLEGLVMGTRCGDIDPAIVFHLHDALGYSVEQINNMLTKESGLQGLTQVTSDCRFVEDNYGEKEEATRAMDVFCHRLAKYVAGYTATLEGRLDAITFTGGIGENSAPIREMVLNRLGIFGIEVDGEANLKARFGGEGTITTANSRIPAMVISTNEELVIAEDTAKLAGL.

A Mg(2+)-binding site is contributed by Asn-9. Lys-16 contributes to the ATP binding site. Arg-89 is a binding site for substrate. The active-site Proton donor/acceptor is the Asp-146. Residues His-206–Gly-210, Asp-281–Arg-283, and Gly-329–Asn-333 contribute to the ATP site. Glu-384 provides a ligand contact to Mg(2+).

This sequence belongs to the acetokinase family. Homodimer. It depends on Mg(2+) as a cofactor. Mn(2+) serves as cofactor.

The protein resides in the cytoplasm. The enzyme catalyses acetate + ATP = acetyl phosphate + ADP. Its pathway is metabolic intermediate biosynthesis; acetyl-CoA biosynthesis; acetyl-CoA from acetate: step 1/2. Catalyzes the formation of acetyl phosphate from acetate and ATP. Can also catalyze the reverse reaction. The sequence is that of Acetate kinase 1 from Aliivibrio fischeri (strain ATCC 700601 / ES114) (Vibrio fischeri).